A 189-amino-acid polypeptide reads, in one-letter code: uncharacterized protein (189 aa).

The next 4 helical transmembrane spans lie at 20-40, 46-66, 100-120, and 126-146; these read FILGSVIFVEFFIFGLVYLTF, TIIITSGVILICLLPISIILI, VLLFIVGINFYLFGNLVSLNI, and FVLYSISAFFIIISIVVGDVI.

To M.jannaschii MJ0795.1 and MJ1249.1.

The protein resides in the cell membrane. This is an uncharacterized protein from Methanocaldococcus jannaschii (strain ATCC 43067 / DSM 2661 / JAL-1 / JCM 10045 / NBRC 100440) (Methanococcus jannaschii).